Consider the following 270-residue polypeptide: Formamidopyrimidine-DNA glycosylase (270 aa).

Pro2 serves as the catalytic Schiff-base intermediate with DNA. Glu3 acts as the Proton donor in catalysis. Lys58 functions as the Proton donor; for beta-elimination activity in the catalytic mechanism. DNA contacts are provided by His91, Arg110, and Lys151. The segment at 236 to 270 (FVYGRGGEACKVCGTELRNVVLGQRASVFCPRCQR) adopts an FPG-type zinc-finger fold. Catalysis depends on Arg260, which acts as the Proton donor; for delta-elimination activity.

The protein belongs to the FPG family. In terms of assembly, monomer. Zn(2+) serves as cofactor.

The enzyme catalyses Hydrolysis of DNA containing ring-opened 7-methylguanine residues, releasing 2,6-diamino-4-hydroxy-5-(N-methyl)formamidopyrimidine.. The catalysed reaction is 2'-deoxyribonucleotide-(2'-deoxyribose 5'-phosphate)-2'-deoxyribonucleotide-DNA = a 3'-end 2'-deoxyribonucleotide-(2,3-dehydro-2,3-deoxyribose 5'-phosphate)-DNA + a 5'-end 5'-phospho-2'-deoxyribonucleoside-DNA + H(+). Its function is as follows. Involved in base excision repair of DNA damaged by oxidation or by mutagenic agents. Acts as a DNA glycosylase that recognizes and removes damaged bases. Has a preference for oxidized purines, such as 7,8-dihydro-8-oxoguanine (8-oxoG). Has AP (apurinic/apyrimidinic) lyase activity and introduces nicks in the DNA strand. Cleaves the DNA backbone by beta-delta elimination to generate a single-strand break at the site of the removed base with both 3'- and 5'-phosphates. The protein is Formamidopyrimidine-DNA glycosylase of Pseudomonas fluorescens (strain SBW25).